Reading from the N-terminus, the 284-residue chain is Shikimate dehydrogenase (NADP(+)) (284 aa).

Shikimate-binding positions include 19-21 (SFS) and T66. The active-site Proton acceptor is K70. D82 serves as a coordination point for NADP(+). Residues N91 and D106 each contribute to the shikimate site. Residues 130–134 (GSGGS) and I226 contribute to the NADP(+) site. Y228 lines the shikimate pocket. G249 is a binding site for NADP(+).

This sequence belongs to the shikimate dehydrogenase family. As to quaternary structure, homodimer.

The catalysed reaction is shikimate + NADP(+) = 3-dehydroshikimate + NADPH + H(+). It functions in the pathway metabolic intermediate biosynthesis; chorismate biosynthesis; chorismate from D-erythrose 4-phosphate and phosphoenolpyruvate: step 4/7. Functionally, involved in the biosynthesis of the chorismate, which leads to the biosynthesis of aromatic amino acids. Catalyzes the reversible NADPH linked reduction of 3-dehydroshikimate (DHSA) to yield shikimate (SA). This Methanococcus vannielii (strain ATCC 35089 / DSM 1224 / JCM 13029 / OCM 148 / SB) protein is Shikimate dehydrogenase (NADP(+)).